A 572-amino-acid polypeptide reads, in one-letter code: Proline--tRNA ligase (572 aa).

Belongs to the class-II aminoacyl-tRNA synthetase family. ProS type 1 subfamily. Homodimer.

Its subcellular location is the cytoplasm. It carries out the reaction tRNA(Pro) + L-proline + ATP = L-prolyl-tRNA(Pro) + AMP + diphosphate. In terms of biological role, catalyzes the attachment of proline to tRNA(Pro) in a two-step reaction: proline is first activated by ATP to form Pro-AMP and then transferred to the acceptor end of tRNA(Pro). As ProRS can inadvertently accommodate and process non-cognate amino acids such as alanine and cysteine, to avoid such errors it has two additional distinct editing activities against alanine. One activity is designated as 'pretransfer' editing and involves the tRNA(Pro)-independent hydrolysis of activated Ala-AMP. The other activity is designated 'posttransfer' editing and involves deacylation of mischarged Ala-tRNA(Pro). The misacylated Cys-tRNA(Pro) is not edited by ProRS. In Cronobacter sakazakii (strain ATCC BAA-894) (Enterobacter sakazakii), this protein is Proline--tRNA ligase.